The sequence spans 398 residues: Serine/threonine-protein kinase ppk23 (398 aa).

The Protein kinase domain occupies 74–359 (YEILEKIEEG…AKEALEHPYF (286 aa)). ATP contacts are provided by residues 80 to 88 (IEEGSYGIV) and Lys103. Asp198 serves as the catalytic Proton acceptor. Positions 359-398 (FYESPRPKDPKFFPTFPSKAKGESKEKNVFQSFRSASPKK) are disordered. Over residues 387-398 (VFQSFRSASPKK) the composition is skewed to polar residues.

Belongs to the protein kinase superfamily. Ser/Thr protein kinase family.

The protein localises to the nucleus. The catalysed reaction is L-seryl-[protein] + ATP = O-phospho-L-seryl-[protein] + ADP + H(+). The enzyme catalyses L-threonyl-[protein] + ATP = O-phospho-L-threonyl-[protein] + ADP + H(+). In Schizosaccharomyces pombe (strain 972 / ATCC 24843) (Fission yeast), this protein is Serine/threonine-protein kinase ppk23 (ppk23).